Consider the following 152-residue polypeptide: Xanthine-guanine phosphoribosyltransferase (152 aa).

Residues 37-38 (RG), arginine 69, and 88-96 (DDLVDTGGT) each bind 5-phospho-alpha-D-ribose 1-diphosphate. Residue arginine 69 participates in GMP binding. Mg(2+) is bound at residue aspartate 89. Positions 92 and 135 each coordinate guanine. Xanthine-binding residues include aspartate 92 and isoleucine 135. GMP is bound by residues 92–96 (DTGGT) and 134–135 (WI).

This sequence belongs to the purine/pyrimidine phosphoribosyltransferase family. XGPT subfamily. As to quaternary structure, homotetramer. Requires Mg(2+) as cofactor.

The protein resides in the cell inner membrane. It catalyses the reaction GMP + diphosphate = guanine + 5-phospho-alpha-D-ribose 1-diphosphate. It carries out the reaction XMP + diphosphate = xanthine + 5-phospho-alpha-D-ribose 1-diphosphate. The catalysed reaction is IMP + diphosphate = hypoxanthine + 5-phospho-alpha-D-ribose 1-diphosphate. Its pathway is purine metabolism; GMP biosynthesis via salvage pathway; GMP from guanine: step 1/1. It participates in purine metabolism; XMP biosynthesis via salvage pathway; XMP from xanthine: step 1/1. Functionally, purine salvage pathway enzyme that catalyzes the transfer of the ribosyl-5-phosphate group from 5-phospho-alpha-D-ribose 1-diphosphate (PRPP) to the N9 position of the 6-oxopurines guanine and xanthine to form the corresponding ribonucleotides GMP (guanosine 5'-monophosphate) and XMP (xanthosine 5'-monophosphate), with the release of PPi. To a lesser extent, also acts on hypoxanthine. In Escherichia coli (strain UTI89 / UPEC), this protein is Xanthine-guanine phosphoribosyltransferase.